The chain runs to 239 residues: Probable 2-phosphosulfolactate phosphatase (239 aa).

This sequence belongs to the ComB family. Mg(2+) is required as a cofactor.

The enzyme catalyses (2R)-O-phospho-3-sulfolactate + H2O = (2R)-3-sulfolactate + phosphate. This Clostridium botulinum (strain 657 / Type Ba4) protein is Probable 2-phosphosulfolactate phosphatase.